Reading from the N-terminus, the 506-residue chain is ATP-dependent rRNA helicase RRP3 (506 aa).

2 disordered regions span residues 1-22 and 37-88; these read MSGKVDKKKGSSVKKTEGKSKE and NQKK…FESF. The span at 49-69 shows a compositional bias: acidic residues; it reads SDQEDDPSESEEEEGSDSEDV. Positions 86–114 match the Q motif motif; that stretch reads ESFSDLDLVPELIEACKNLNFAKPTPIQA. Positions 117-289 constitute a Helicase ATP-binding domain; that stretch reads IPPALQGHDI…RASLTNPVKC (173 aa). 130–137 serves as a coordination point for ATP; the sequence is AQTGSGKT. The short motif at 236 to 239 is the DEAD box element; that stretch reads DEAD. A Helicase C-terminal domain is found at 312-460; it reads LKNTYLIYLM…KENVNKDAIL (149 aa). Residues 485 to 506 form a disordered region; the sequence is IARGKGRRGRMAARDDMDKGER. Basic and acidic residues predominate over residues 496–506; sequence AARDDMDKGER.

The protein belongs to the DEAD box helicase family. DDX47/RRP3 subfamily. Interacts with the SSU processome.

The protein localises to the nucleus. The catalysed reaction is ATP + H2O = ADP + phosphate + H(+). In terms of biological role, ATP-dependent rRNA helicase required for pre-ribosomal RNA processing. Involved in the maturation of the 35S-pre-rRNA and to its cleavage to mature 18S rRNA. The polypeptide is ATP-dependent rRNA helicase RRP3 (Vanderwaltozyma polyspora (strain ATCC 22028 / DSM 70294 / BCRC 21397 / CBS 2163 / NBRC 10782 / NRRL Y-8283 / UCD 57-17) (Kluyveromyces polysporus)).